The primary structure comprises 765 residues: Protein transport protein Sec23A (765 aa).

Zn(2+)-binding residues include cysteine 61, cysteine 66, cysteine 85, and cysteine 88. The stretch at 632 to 718 (PEPVLLDSSS…EHGGSQARFL (87 aa)) is one Gelsolin-like repeat.

This sequence belongs to the SEC23/SEC24 family. SEC23 subfamily. As to quaternary structure, COPII is composed of at least five proteins: the Sec23/24 complex, the Sec13/31 complex and Sar1.

The protein localises to the cytoplasmic vesicle. The protein resides in the COPII-coated vesicle membrane. It is found in the endoplasmic reticulum membrane. It localises to the cytoplasm. Its subcellular location is the cytosol. Component of the coat protein complex II (COPII) which promotes the formation of transport vesicles from the endoplasmic reticulum (ER). The coat has two main functions, the physical deformation of the endoplasmic reticulum membrane into vesicles and the selection of cargo molecules for their transport to the Golgi complex. The sequence is that of Protein transport protein Sec23A from Danio rerio (Zebrafish).